Here is a 455-residue protein sequence, read N- to C-terminus: Probable alpha-galactosidase B (455 aa).

The signal sequence occupies residues Met1–Ala16. Intrachain disulfides connect Cys39-Cys71 and Cys121-Cys151. The N-linked (GlcNAc...) asparagine glycan is linked to Asn42. Asp149 serves as the catalytic Nucleophile. 2 N-linked (GlcNAc...) asparagine glycosylation sites follow: Asn177 and Asn192. Asn222 to Ala226 is a substrate binding site. Asp244 functions as the Proton donor in the catalytic mechanism. Asn395 carries N-linked (GlcNAc...) asparagine glycosylation.

The protein belongs to the glycosyl hydrolase 27 family.

The protein resides in the secreted. It catalyses the reaction Hydrolysis of terminal, non-reducing alpha-D-galactose residues in alpha-D-galactosides, including galactose oligosaccharides, galactomannans and galactolipids.. Hydrolyzes a variety of simple alpha-D-galactoside as well as more complex molecules such as oligosaccharides and polysaccharides. The chain is Probable alpha-galactosidase B (aglB) from Emericella nidulans (strain FGSC A4 / ATCC 38163 / CBS 112.46 / NRRL 194 / M139) (Aspergillus nidulans).